A 200-amino-acid chain; its full sequence is Inducible T-cell costimulator (200 aa).

Residues 1 to 20 (MKPYFSCVFVFCFLIKLLTG) form the signal peptide. The Extracellular portion of the chain corresponds to 21–145 (ELNDLANHRM…LCCQLKLWLP (125 aa)). In terms of domain architecture, Ig-like V-type spans 30 to 133 (MFSFHDGGVQ…LSGGYLLIYE (104 aa)). 2 disulfide bridges follow: cysteine 42–cysteine 109 and cysteine 63–cysteine 83. Asparagine 89 and asparagine 123 each carry an N-linked (GlcNAc...) asparagine glycan. A helical transmembrane segment spans residues 146–166 (VGCAAFVAALLFGCIFIVWFA). Residues 167–200 (KKKYRSSVHDPNSEYMFMAAVNTNKKSRLAGMTS) are Cytoplasmic-facing.

Homodimer; disulfide-linked. Interacts with ICOSLG. Interacts with PIK3R1. Interacts with TBK1; this interaction is critical for the maturation of T follicular regulatory cells. In terms of processing, N-glycosylated. In terms of tissue distribution, strongly expressed in the spleen and lung. Lower expression seen in liver, kidney and testis.

It is found in the cell membrane. Its function is as follows. Stimulatory receptor expressed in activated or antigen-experienced T-cells that plays an important role in the immune response. Upon binding to its ligand ICOSL expressed on antigen presenting cells (APCs), delivers costimulatory signals that enhances all basic T-cell responses to a foreign antigen, namely proliferation, secretion of lymphokines including IL10, up-regulation of molecules that mediate cell-cell interaction, and effective help for antibody secretion by B-cells. Also acts as a costimulatory receptor critical for the differentiation of T follicular regulatory cells upon immune challenges such as viral infection. Mechanistically, potentiates TCR-induced calcium flux by augmenting PLCG1 activation and actin remodeling. In addition, activates PI3K signaling pathways independently of calcium flux. Essential both for efficient interaction between T and B-cells and for normal antibody responses to T-cell dependent antigens. Prevents the apoptosis of pre-activated T-cells. Plays a critical role in CD40-mediated class switching of immunoglobin isotypes. The protein is Inducible T-cell costimulator (Icos) of Rattus norvegicus (Rat).